Reading from the N-terminus, the 299-residue chain is ATP phosphoribosyltransferase (299 aa).

This sequence belongs to the ATP phosphoribosyltransferase family. Long subfamily. Mg(2+) serves as cofactor.

The protein resides in the cytoplasm. It carries out the reaction 1-(5-phospho-beta-D-ribosyl)-ATP + diphosphate = 5-phospho-alpha-D-ribose 1-diphosphate + ATP. It functions in the pathway amino-acid biosynthesis; L-histidine biosynthesis; L-histidine from 5-phospho-alpha-D-ribose 1-diphosphate: step 1/9. With respect to regulation, feedback inhibited by histidine. Catalyzes the condensation of ATP and 5-phosphoribose 1-diphosphate to form N'-(5'-phosphoribosyl)-ATP (PR-ATP). Has a crucial role in the pathway because the rate of histidine biosynthesis seems to be controlled primarily by regulation of HisG enzymatic activity. This chain is ATP phosphoribosyltransferase, found in Actinobacillus pleuropneumoniae serotype 5b (strain L20).